Consider the following 757-residue polypeptide: Endonuclease MutS2 (757 aa).

321 to 328 is an ATP binding site; the sequence is GPNMGGKT. Residues 681–756 enclose the Smr domain; it reads IDIRGMTVEE…GTGVTVVEVK (76 aa).

This sequence belongs to the DNA mismatch repair MutS family. MutS2 subfamily. In terms of assembly, homodimer. Binds to stalled ribosomes, contacting rRNA.

Its function is as follows. Endonuclease that is involved in the suppression of homologous recombination and thus may have a key role in the control of bacterial genetic diversity. Acts as a ribosome collision sensor, splitting the ribosome into its 2 subunits. Detects stalled/collided 70S ribosomes which it binds and splits by an ATP-hydrolysis driven conformational change. Acts upstream of the ribosome quality control system (RQC), a ribosome-associated complex that mediates the extraction of incompletely synthesized nascent chains from stalled ribosomes and their subsequent degradation. Probably generates substrates for RQC. The protein is Endonuclease MutS2 of Thermotoga sp. (strain RQ2).